A 396-amino-acid chain; its full sequence is S-adenosylmethionine synthase (396 aa).

An ATP-binding site is contributed by histidine 16. Aspartate 18 is a Mg(2+) binding site. Glutamate 44 is a K(+) binding site. Positions 57 and 100 each coordinate L-methionine. The segment at glutamine 100–arginine 110 is flexible loop. ATP-binding positions include aspartate 165–lysine 167, lysine 231–phenylalanine 232, aspartate 240, arginine 246–lysine 247, alanine 263, and lysine 267. Aspartate 240 is an L-methionine binding site. Lysine 271 contributes to the L-methionine binding site.

Belongs to the AdoMet synthase family. As to quaternary structure, homotetramer; dimer of dimers. Mg(2+) serves as cofactor. K(+) is required as a cofactor.

It is found in the cytoplasm. The catalysed reaction is L-methionine + ATP + H2O = S-adenosyl-L-methionine + phosphate + diphosphate. It participates in amino-acid biosynthesis; S-adenosyl-L-methionine biosynthesis; S-adenosyl-L-methionine from L-methionine: step 1/1. Functionally, catalyzes the formation of S-adenosylmethionine (AdoMet) from methionine and ATP. The overall synthetic reaction is composed of two sequential steps, AdoMet formation and the subsequent tripolyphosphate hydrolysis which occurs prior to release of AdoMet from the enzyme. This is S-adenosylmethionine synthase from Ectopseudomonas mendocina (strain ymp) (Pseudomonas mendocina).